Reading from the N-terminus, the 167-residue chain is Leptin (167 aa).

Positions 1–21 (MRCGSLCRFLWLWSCLPYIEA) are cleaved as a signal peptide. The cysteines at positions 117 and 167 are disulfide-linked.

The protein belongs to the leptin family.

The protein localises to the secreted. Functionally, key player in the regulation of energy balance and body weight control. Once released into the circulation, has central and peripheral effects by binding LEPR, found in many tissues, which results in the activation of several major signaling pathways. In the hypothalamus, acts as an appetite-regulating factor that induces a decrease in food intake and an increase in energy consumption by inducing anorexinogenic factors and suppressing orexigenic neuropeptides, also regulates bone mass and secretion of hypothalamo-pituitary-adrenal hormones. In the periphery, increases basal metabolism, influences reproductive function, regulates pancreatic beta-cell function and insulin secretion, is pro-angiogenic for endothelial cell and affects innate and adaptive immunity. In the arcuate nucleus of the hypothalamus, activates by depolarization POMC neurons inducing FOS and SOCS3 expression to release anorexigenic peptides and inhibits by hyperpolarization NPY neurons inducing SOCS3 with a consequent reduction on release of orexigenic peptides. In addition to its known satiety inducing effect, has a modulatory role in nutrient absorption. In the intestine, reduces glucose absorption by enterocytes by activating PKC and leading to a sequential activation of p38, PI3K and ERK signaling pathways which exerts an inhibitory effect on glucose absorption. Acts as a growth factor on certain tissues, through the activation of different signaling pathways increases expression of genes involved in cell cycle regulation such as CCND1, via JAK2-STAT3 pathway, or VEGFA, via MAPK1/3 and PI3K-AKT1 pathways. May also play an apoptotic role via JAK2-STAT3 pathway and up-regulation of BIRC5 expression. Pro-angiogenic, has mitogenic activity on vascular endothelial cells and plays a role in matrix remodeling by regulating the expression of matrix metalloproteinases (MMPs) and tissue inhibitors of metalloproteinases (TIMPs). In innate immunity, modulates the activity and function of neutrophils by increasing chemotaxis and the secretion of oxygen radicals. Increases phagocytosis by macrophages and enhances secretion of pro-inflammatory mediators. Increases cytotoxic ability of NK cells. Plays a pro-inflammatory role, in synergy with IL1B, by inducing NOS2 which promotes the production of IL6, IL8 and Prostaglandin E2, through a signaling pathway that involves JAK2, PI3K, MAP2K1/MEK1 and MAPK14/p38. In adaptive immunity, promotes the switch of memory T-cells towards T helper-1 cell immune responses. Increases CD4(+)CD25(-) T-cell proliferation and reduces autophagy during TCR (T-cell receptor) stimulation, through MTOR signaling pathway activation and BCL2 up-regulation. The chain is Leptin (LEP) from Halichoerus grypus (Gray seal).